The primary structure comprises 214 residues: Thymidylate kinase (214 aa).

9–16 contributes to the ATP binding site; the sequence is GVDGSGKS.

Belongs to the thymidylate kinase family.

It catalyses the reaction dTMP + ATP = dTDP + ADP. Phosphorylation of dTMP to form dTDP in both de novo and salvage pathways of dTTP synthesis. The protein is Thymidylate kinase of Symbiobacterium thermophilum (strain DSM 24528 / JCM 14929 / IAM 14863 / T).